A 338-amino-acid chain; its full sequence is Tetraacyldisaccharide 4'-kinase (338 aa).

Position 67-74 (67-74) interacts with ATP; it reads IAGGAGKT.

Belongs to the LpxK family.

It catalyses the reaction a lipid A disaccharide + ATP = a lipid IVA + ADP + H(+). Its pathway is glycolipid biosynthesis; lipid IV(A) biosynthesis; lipid IV(A) from (3R)-3-hydroxytetradecanoyl-[acyl-carrier-protein] and UDP-N-acetyl-alpha-D-glucosamine: step 6/6. In terms of biological role, transfers the gamma-phosphate of ATP to the 4'-position of a tetraacyldisaccharide 1-phosphate intermediate (termed DS-1-P) to form tetraacyldisaccharide 1,4'-bis-phosphate (lipid IVA). This Acidovorax ebreus (strain TPSY) (Diaphorobacter sp. (strain TPSY)) protein is Tetraacyldisaccharide 4'-kinase.